The sequence spans 430 residues: Protein AST2 (430 aa).

Lipid raft-associated protein involved in the targeting of PMA1 from Golgi to the plasma membrane. May induce clustering of PMA1, which facilitates partition of PMA1 into lipid rafts after leaving the ER its and transport to the cell surface. The protein is Protein AST2 of Saccharomyces cerevisiae (strain ATCC 204508 / S288c) (Baker's yeast).